A 249-amino-acid polypeptide reads, in one-letter code: Homeobox protein TGIF2LX (249 aa).

Residues 1–27 (MEAAADRPAETRSRVEKDSRRAKKDSP) are compositionally biased toward basic and acidic residues. Disordered stretches follow at residues 1–60 (MEAA…KKKR) and 121–215 (QRRG…EPVS). A compositionally biased stretch (polar residues) spans 28-46 (AKTQSPAQDTSIMLRSNAD). The homeobox; TALE-type DNA-binding region spans 55–118 (EHKKKRKGYL…INARRRILPD (64 aa)). Positions 159 to 172 (DNVQSLPLRSSPKG) are enriched in polar residues. Low complexity predominate over residues 202–215 (VSNITSSSSPEPVS).

It belongs to the TALE/TGIF homeobox family.

It localises to the nucleus. In terms of biological role, may have a transcription role in testis. The sequence is that of Homeobox protein TGIF2LX (TGIF2LX) from Miopithecus talapoin (Angolan talapoin).